A 372-amino-acid polypeptide reads, in one-letter code: Chaperone protein DnaJ (372 aa).

A J domain is found at 5–70; the sequence is DFYEVLGVTK…QKRAAYDRYG (66 aa). Residues 129–207 form a CR-type zinc finger; sequence GKLASLTLPT…CGGAGRVTRE (79 aa). 8 residues coordinate Zn(2+): cysteine 142, cysteine 145, cysteine 159, cysteine 162, cysteine 181, cysteine 184, cysteine 195, and cysteine 198. CXXCXGXG motif repeat units lie at residues 142–149, 159–166, 181–188, and 195–202; these read CEACDGTG, CPTCGGQG, CPQCHGRG, and CQACGGAG.

It belongs to the DnaJ family. Homodimer. Zn(2+) is required as a cofactor.

It is found in the cytoplasm. In terms of biological role, participates actively in the response to hyperosmotic and heat shock by preventing the aggregation of stress-denatured proteins and by disaggregating proteins, also in an autonomous, DnaK-independent fashion. Unfolded proteins bind initially to DnaJ; upon interaction with the DnaJ-bound protein, DnaK hydrolyzes its bound ATP, resulting in the formation of a stable complex. GrpE releases ADP from DnaK; ATP binding to DnaK triggers the release of the substrate protein, thus completing the reaction cycle. Several rounds of ATP-dependent interactions between DnaJ, DnaK and GrpE are required for fully efficient folding. Also involved, together with DnaK and GrpE, in the DNA replication of plasmids through activation of initiation proteins. The polypeptide is Chaperone protein DnaJ (Beijerinckia indica subsp. indica (strain ATCC 9039 / DSM 1715 / NCIMB 8712)).